A 290-amino-acid polypeptide reads, in one-letter code: Hydroxyacylglutathione hydrolase-like protein (290 aa).

Histidine 54, histidine 56, aspartate 58, histidine 59, histidine 110, aspartate 134, and histidine 172 together coordinate Zn(2+).

This sequence belongs to the metallo-beta-lactamase superfamily. Glyoxalase II family. It depends on Zn(2+) as a cofactor.

Functionally, hydrolase acting on ester bonds. This chain is Hydroxyacylglutathione hydrolase-like protein (HAGHL), found in Homo sapiens (Human).